Consider the following 57-residue polypeptide: DNA gyrase inhibitor YacG (57 aa).

C10, C13, C25, and C29 together coordinate Zn(2+).

It belongs to the DNA gyrase inhibitor YacG family. Interacts with GyrB. The cofactor is Zn(2+).

Inhibits all the catalytic activities of DNA gyrase by preventing its interaction with DNA. Acts by binding directly to the C-terminal domain of GyrB, which probably disrupts DNA binding by the gyrase. The chain is DNA gyrase inhibitor YacG from Brucella melitensis biotype 1 (strain ATCC 23456 / CCUG 17765 / NCTC 10094 / 16M).